Reading from the N-terminus, the 945-residue chain is Splicing factor, suppressor of white-apricot homolog (945 aa).

Disordered stretches follow at residues 1 to 28 (MYGAGGGRAKPERKGGVKEEAGPGGTGT) and 156 to 185 (DYYDPSEPTEEEEPSKQREKNEAENLEENE). Basic and acidic residues-rich tracts occupy residues 9–21 (AKPERKGGVKEEA) and 169–178 (PSKQREKNEA). An SURP motif 1 repeat occupies 211–253 (IIERTANFVCKQGAQFEIMLKAKQARNSQFDFLRFDHYLNPYY). The segment at 271–301 (SKNEEKKKSGPTSDNEEEDDEEDGSYLHPSL) is disordered. Residue Ser-283 is modified to Phosphoserine. Over residues 284–294 (DNEEEDDEEDG) the composition is skewed to acidic residues. At Lys-315 the chain carries N6-acetyllysine. 2 disordered regions span residues 332-355 (KAQADSSAPAPPTADGTPAQPSQV) and 403-448 (SSSP…PVAI). Over residues 335 to 352 (ADSSAPAPPTADGTPAQP) the composition is skewed to low complexity. The span at 412 to 426 (VPPPPGTTPPPPPTT) shows a compositional bias: pro residues. Residues 427-447 (AEPSSGVTSTTTTTSALAPVA) are compositionally biased toward low complexity. Residues 458-498 (VIDKLAEYVARNGLKFETSVRAKNDQRFEFLQPWHQYNAYY) form an SURP motif 2 repeat. 3 disordered regions span residues 512–564 (GSTQ…KSTV), 589–680 (PLEK…QAER), and 712–921 (DTGV…VQSK). Positions 514-527 (TQAASTAEEAPTET) are enriched in low complexity. Residues 528–540 (AVEESGEAGEDGA) are compositionally biased toward acidic residues. The span at 589-598 (PLEKNRVKLD) shows a compositional bias: basic and acidic residues. 2 positions are modified to phosphoserine: Ser-601 and Ser-621. Residues 615–630 (SSVANPSPAAAPPSVA) are compositionally biased toward low complexity. A coiled-coil region spans residues 632–686 (EEKKPQLTQEELEAKQAKQKLEDRLAAAAREKLAQASKESKEKQLQAERKRKAAL). Thr-639 is modified (phosphothreonine). Composition is skewed to basic and acidic residues over residues 643 to 679 (LEAKQAKQKLEDRLAAAAREKLAQASKESKEKQLQAE) and 733 to 752 (KPPERPSNRCRDPPREEERE). 2 stretches are compositionally biased toward basic residues: residues 753–787 (KKKKKHKKRSRTRSRSPKYHSSSKPRSRSHSKAKH) and 795–810 (TVRRSRSRSRSPRRRA). Basic and acidic residues predominate over residues 811–821 (HSPERRREERS). A phosphoserine mark is found at Ser-829 and Ser-831. Over residues 835–861 (SRKRTRSRSPHEKKKKRRSRSRTKAKA) the composition is skewed to basic residues. A compositionally biased stretch (low complexity) spans 871 to 894 (QAAQRPSAHSAHSASISPVESRGS). The segment covering 895 to 908 (SQERSRGVSQEKDG) has biased composition (basic and acidic residues). 2 positions are modified to phosphoserine: Ser-899 and Ser-903. Positions 909-920 (QISSAIVSSVQS) are enriched in low complexity.

It localises to the nucleus. Plays a role as an alternative splicing regulator. Regulates its own expression at the level of RNA processing. Also regulates the splicing of fibronectin and CD45 genes. May act, at least in part, by interaction with other R/S-containing splicing factors. Represses the splicing of MAPT/Tau exon 10. In Mus musculus (Mouse), this protein is Splicing factor, suppressor of white-apricot homolog (Sfswap).